We begin with the raw amino-acid sequence, 86 residues long: Mitochondrial import inner membrane translocase subunit Tim10 (86 aa).

The Twin CX3C motif signature appears at 29 to 54 (CQAKCIATAFKESELTKGEAVCLDRC). 2 disulfides stabilise this stretch: C29–C54 and C33–C50.

It belongs to the small Tim family. As to quaternary structure, heterohexamer; composed of 3 copies of tim-9/tin-9.1 and 3 copies of tim-10/tin-10, named soluble 70 kDa complex. The complex associates with the tim-22 component of the TIM22 complex. Interacts with multi-pass transmembrane proteins in transit.

Its subcellular location is the mitochondrion inner membrane. Its function is as follows. Mitochondrial intermembrane chaperone that participates in the import and insertion of multi-pass transmembrane proteins into the mitochondrial inner membrane. May also be required for the transfer of beta-barrel precursors from the TOM complex to the sorting and assembly machinery (SAM complex) of the outer membrane. Acts as a chaperone-like protein that protects the hydrophobic precursors from aggregation and guide them through the mitochondrial intermembrane space. The polypeptide is Mitochondrial import inner membrane translocase subunit Tim10 (tin-10) (Caenorhabditis briggsae).